Here is a 311-residue protein sequence, read N- to C-terminus: Homeobox-leucine zipper protein HOX1 (311 aa).

2 disordered regions span residues 29–69 (AGGA…SDHR) and 97–160 (AETT…KKLR). Residues 119 to 145 (SSPNSTLSSLSGKRGAPSAATAAAAAA) show a composition bias toward low complexity. A DNA-binding region (homeobox) is located at residues 154–213 (GSRKKLRLSKDQAAVLEDTFKEHNTLNPKQKAALARQLNLKPRQVEVWFQNRRARTKLKQ). Positions 212 to 256 (KQTEVDCELLKRCCETLTDENRRLHRELQELRALKLATAAAAPHH) are leucine-zipper. The disordered stretch occupies residues 279-311 (SAATTTRNNSGAAPARPVPTRPWPPAAAQRSSA). The span at 280–289 (AATTTRNNSG) shows a compositional bias: polar residues. The span at 294–303 (RPVPTRPWPP) shows a compositional bias: pro residues.

This sequence belongs to the HD-ZIP homeobox family. Class II subfamily. In terms of assembly, homodimer. May form a heterodimer with HOX2, HOX3 or HOX7. As to expression, expressed in root provascular and vascular cylinder, provascular and vascular strands of leaves, provascular and vascular strands of the whole panicle, in mature embryo provascular bundles of scutellum and embryonic axis and provascular and vascular strands of young immature spikelet organs. Expressed in differentiating and differentiated xylem and phloem elements, and in outer and inner bundle sheath cells of all vascular bundles. Expressed in auricles, ligules, culm, guard cells brac hairs and pollen.

The protein resides in the nucleus. Probable transcription repressor involved leaf development. Binds to the DNA sequence 5'-CAAT[GC]ATTG-3'. May act as a regulatory switch to specify provascular cell fate. This is Homeobox-leucine zipper protein HOX1 (HOX1) from Oryza sativa subsp. japonica (Rice).